Reading from the N-terminus, the 569-residue chain is Protein germ cell-less (569 aa).

Residues 17–43 (SNRRKRKRSTDSSLGKDDPAQLDTTQP) are disordered. The BTB domain occupies 66 to 136 (SDVAVMALDK…MYSDEIEIES (71 aa)). The disordered stretch occupies residues 517–553 (GANSDRPLSPSSADDSAVFIGDSEPSTPSSPAPRPRI).

The protein localises to the cytoplasm. Its function is as follows. Required for the specification of pole cells and germ cell formation. Mothers with reduced glc function give rise to sterile adult progeny that lack germ cells. In Drosophila melanogaster (Fruit fly), this protein is Protein germ cell-less (gcl).